The following is a 275-amino-acid chain: Large ribosomal subunit protein uL2 (275 aa).

Disordered stretches follow at residues 36-55 (PKKRGSGRNNNGHITVRHKG) and 223-275 (VVMN…RHAR).

This sequence belongs to the universal ribosomal protein uL2 family. In terms of assembly, part of the 50S ribosomal subunit. Forms a bridge to the 30S subunit in the 70S ribosome.

Functionally, one of the primary rRNA binding proteins. Required for association of the 30S and 50S subunits to form the 70S ribosome, for tRNA binding and peptide bond formation. It has been suggested to have peptidyltransferase activity; this is somewhat controversial. Makes several contacts with the 16S rRNA in the 70S ribosome. This Thiobacillus denitrificans (strain ATCC 25259 / T1) protein is Large ribosomal subunit protein uL2.